Reading from the N-terminus, the 493-residue chain is Probable cytosol aminopeptidase (493 aa).

Positions 256 and 261 each coordinate Mn(2+). Lys268 is a catalytic residue. Asp279, Asp338, and Glu340 together coordinate Mn(2+). Residue Arg342 is part of the active site.

This sequence belongs to the peptidase M17 family. Mn(2+) serves as cofactor.

It localises to the cytoplasm. The enzyme catalyses Release of an N-terminal amino acid, Xaa-|-Yaa-, in which Xaa is preferably Leu, but may be other amino acids including Pro although not Arg or Lys, and Yaa may be Pro. Amino acid amides and methyl esters are also readily hydrolyzed, but rates on arylamides are exceedingly low.. It catalyses the reaction Release of an N-terminal amino acid, preferentially leucine, but not glutamic or aspartic acids.. In terms of biological role, presumably involved in the processing and regular turnover of intracellular proteins. Catalyzes the removal of unsubstituted N-terminal amino acids from various peptides. The chain is Probable cytosol aminopeptidase from Phytoplasma australiense.